Here is a 452-residue protein sequence, read N- to C-terminus: Trigger factor (452 aa).

Positions 170 to 256 constitute a PPIase FKBP-type domain; it reads NSIVKVDFVE…IKSIKKRDLP (87 aa).

This sequence belongs to the FKBP-type PPIase family. Tig subfamily.

The protein localises to the cytoplasm. The enzyme catalyses [protein]-peptidylproline (omega=180) = [protein]-peptidylproline (omega=0). Involved in protein export. Acts as a chaperone by maintaining the newly synthesized protein in an open conformation. Functions as a peptidyl-prolyl cis-trans isomerase. The chain is Trigger factor from Borrelia garinii subsp. bavariensis (strain ATCC BAA-2496 / DSM 23469 / PBi) (Borreliella bavariensis).